A 311-amino-acid chain; its full sequence is tRNA-cytidine(32) 2-sulfurtransferase (311 aa).

The PP-loop motif signature appears at 47-52 (SGGKDS). C122, C125, and C213 together coordinate [4Fe-4S] cluster.

Belongs to the TtcA family. In terms of assembly, homodimer. Requires Mg(2+) as cofactor. [4Fe-4S] cluster is required as a cofactor.

The protein resides in the cytoplasm. The enzyme catalyses cytidine(32) in tRNA + S-sulfanyl-L-cysteinyl-[cysteine desulfurase] + AH2 + ATP = 2-thiocytidine(32) in tRNA + L-cysteinyl-[cysteine desulfurase] + A + AMP + diphosphate + H(+). The protein operates within tRNA modification. Its function is as follows. Catalyzes the ATP-dependent 2-thiolation of cytidine in position 32 of tRNA, to form 2-thiocytidine (s(2)C32). The sulfur atoms are provided by the cysteine/cysteine desulfurase (IscS) system. In Salmonella heidelberg (strain SL476), this protein is tRNA-cytidine(32) 2-sulfurtransferase.